Reading from the N-terminus, the 54-residue chain is uncharacterized protein (54 aa).

The signal sequence occupies residues 1–13 (MLLCFHMCQRIMW).

It is found in the secreted. This is an uncharacterized protein from Saccharomyces cerevisiae (strain ATCC 204508 / S288c) (Baker's yeast).